The primary structure comprises 437 residues: tRNA(Ile)-lysidine synthase (437 aa).

22–27 contributes to the ATP binding site; it reads SGGLDS.

The protein belongs to the tRNA(Ile)-lysidine synthase family.

The protein resides in the cytoplasm. The enzyme catalyses cytidine(34) in tRNA(Ile2) + L-lysine + ATP = lysidine(34) in tRNA(Ile2) + AMP + diphosphate + H(+). Ligates lysine onto the cytidine present at position 34 of the AUA codon-specific tRNA(Ile) that contains the anticodon CAU, in an ATP-dependent manner. Cytidine is converted to lysidine, thus changing the amino acid specificity of the tRNA from methionine to isoleucine. The protein is tRNA(Ile)-lysidine synthase of Xylella fastidiosa (strain Temecula1 / ATCC 700964).